Consider the following 864-residue polypeptide: MGNRGMEDLIPLVNRLQDAFSAIGQNADLDLPQIAVVGGQSAGKSSVLENFVGRDFLPRGSGIVTRRPLVLQLVNSTTEYAEFLHCKGKKFTDFEEVRLEIEAETDRVTGTNKGISPVPINLRVYSPHVLNLTLVDLPGMTKVPVGDQPPDIEFQIRDMLMQFVTKENCLILAVSPANSDLANSDALKIAKEVDPQGQRTIGVITKLDLMDEGTDARDVLENKLLPLRRGYIGVVNRSQKDIDGKKDITAALAAERKFFLSHPSYRHLADRMGTPYLQKVLNQQLTNHIRDTLPGLRNKLQSQLLSIEKEVDEYKNFRPDDPARKTKALLQMVQQFAVDFEKRIEGSGDQIDTYELSGGARINRIFHERFPFELVKMEFDEKELRREISYAIKNIHGIRTGLFTPDLAFEATVKKQVQKLKEPSIKCVDMVVSELTSTIRKCSEKLQQYPRLREEMERIVTTHIREREGRTKEQVMLLIDIELAYMNTNHEDFIGFANAQQRSNQMNKKKTSGNQDEILVIRKGWLTINNIGIMKGGSKEYWFVLTAENLSWYKDDEEKEKKYMLSVDNLKLRDVEKGFMSSKHIFALFNTEQRNVYKDYRQLELACETQEEVDSWKASFLRAGVYPERVGDKEKASETEENGSDSFMHSMDPQLERQVETIRNLVDSYMAIVNKTVRDLMPKTIMHLMINNTKEFIFSELLANLYSCGDQNTLMEESAEQAQRRDEMLRMYHALKEALSIIGDINTTTVSTPMPPPVDDSWLQVQSVPAGRRSPTSSPTPQRRAPAVPPARPGSRGPAPGPPPAGSALGGAPPVPSRPGASPDPFGPPPQVPSRPNRAPPGVPSRSGQASPSRPESPRPPFDL.

The Dynamin-type G domain maps to 28–294 (DLDLPQIAVV…LTNHIRDTLP (267 aa)). The G1 motif stretch occupies residues 38-45 (GGQSAGKS). 7 residues coordinate GDP: serine 41, glycine 43, lysine 44, serine 45, serine 46, arginine 59, and glycine 60. The G2 motif stretch occupies residues 64–66 (VTR). Tyrosine 80 bears the Phosphotyrosine mark. The residue at position 125 (tyrosine 125) is a 3'-nitrotyrosine; alternate. Residue tyrosine 125 is modified to Phosphotyrosine; alternate. The interval 136–139 (DLPG) is G3 motif. Positions 205 to 208 (TKLD) are G4 motif. Residues lysine 206, aspartate 208, aspartate 211, asparagine 236, arginine 237, and glutamine 239 each contribute to the GDP site. Residues 235-238 (VNRS) are G5 motif. Phosphoserine is present on residues serine 306 and serine 347. Tyrosine 354 is modified (phosphotyrosine). A Phosphoserine modification is found at serine 512. In terms of domain architecture, PH spans 519–625 (LVIRKGWLTI…WKASFLRAGV (107 aa)). The region spanning 659-750 (VETIRNLVDS…IIGDINTTTV (92 aa)) is the GED domain. A disordered region spans residues 767-864 (SVPAGRRSPT…PESPRPPFDL (98 aa)). Phosphoserine; by CDK5 is present on serine 774. Serine 778 is subject to Phosphoserine. Arginine 796 is modified (omega-N-methylarginine). Serine 822 is subject to Phosphoserine. Residues 825-843 (PFGPPPQVPSRPNRAPPGV) show a composition bias toward pro residues. Residues serine 851 and serine 857 each carry the phosphoserine modification.

This sequence belongs to the TRAFAC class dynamin-like GTPase superfamily. Dynamin/Fzo/YdjA family. As to quaternary structure, homodimer; homodimerization is mediated by the dynamin-type G domain which promotes assembly-stimulated GTPase activity. Homo-tetramer formed from two dimers in the absence of lipid. Oligomerizes into a helical polymer that self-assembles around the vesicle membrane, when associated to the menbrane through lipid binding. Interacts (via C-terminal proline-rich domain (PRD)) with SNX9 (via SH3 domain); this interaction allows regulation of DNM1 self-assembly during late stages of endocytic vesicle formation and supports DNM1's early functions in accelerating clathrin-coated pits (CCPs) maturation in non neuronals cell. Interacts (via C-terminal proline-rich domain (PRD)) with MYO1E (via SH3 domain); this interaction regulates receptor-mediated endocytosis. Interacts with SNX33 (via SH3 domain); this interaction decreases DNM1-dependent endocytosis. Interacts with DIAPH1. Interacts with GRB2 (via SH3 domain); this interaction mediates disassembly of DNM1 polymers, therefore modulates self-assembly. Forms a complex with BIN1 (via SH3 domain) and SH3GL2 (via SH3 domain). Forms a complex with SH3GL2 (via SH3 domain) and AMPH (via SH3 domain). Forms a complex with SH3GL2 (via SH3 domain) and SYNJ1. Interacts with AMPH. Interacts (via C-terminal proline-rich domain (PRD)) with SYT1; this interaction facilitates vesicle fission during clathrin-mediated endocytosis (CME). Interacts (via C-terminal proline-rich domain (PRD)) with PLCG1 (via SH3 domain); this interaction stimulates the release of GDP from DNM1 and enhances DNM1-dependent endocytosis. Interacts with SNPH; this interaction inhibits the binding of DNM1 to AMPH and DNM1-receptor-mediated endocytosis. Interacts with CAV1. Interacts with SH3GLB1 (via SH3 domain). Interacts with PACSIN1 (via SH3 domain), PACSIN2 (via SH3 domain) and PACSIN3 (via SH3 domain). Interacts with UNC119; this interaction decreases DNM1's GTPase activity and affects DNM1's interaction with AMPH. Interacts (GTP-bound form) with DNAJC6; this interaction allows clathrin-coated vesicle (CCV) formation at the plasma membrane. In terms of processing, phosphorylation at Ser-774 by GSK3B/GSK3-beta leads to inactivation of receptor-mediated endocytosis in non-neuronal cells. Dephosphorylation at Ser-774, through the EGFR downstream signaling, leads to activation and regulates early stages of clathrin-mediated endocytosis (CME). Phosphorylated by CDK5 leading to synaptic vesicle endocytosis (SVE) activation. Brain-specific (peripheral sensory neurons).

The protein localises to the cytoplasmic vesicle. It is found in the clathrin-coated vesicle. The protein resides in the golgi apparatus. It localises to the cell membrane. Its subcellular location is the membrane. The protein localises to the clathrin-coated pit. It is found in the presynapse. The protein resides in the secretory vesicle. It localises to the chromaffin granule. It carries out the reaction GTP + H2O = GDP + phosphate + H(+). In terms of biological role, catalyzes the hydrolysis of GTP and utilizes this energy to mediate vesicle scission and participates in many forms of endocytosis, such as clathrin-mediated endocytosis or synaptic vesicle endocytosis as well as rapid endocytosis (RE). Associates to the membrane, through lipid binding, and self-assembles into rings and stacks of interconnected rings through oligomerization to form a helical polymer around the vesicle membrane leading to constriction of invaginated coated pits around their necks. Self-assembly of the helical polymer induces membrane tubules narrowing until the polymer reaches a length sufficient to trigger GTP hydrolysis. Depending on the curvature imposed on the tubules, membrane detachment from the helical polymer upon GTP hydrolysis can cause spontaneous hemifission followed by complete fission. May play a role in regulating early stages of clathrin-mediated endocytosis in non-neuronal cells through its activation by dephosphorylation via the signaling downstream of EGFR. Controls vesicle size at a step before fission, during formation of membrane pits, at hippocampal synapses. Controls plastic adaptation of the synaptic vesicle recycling machinery to high levels of activity. Mediates rapid endocytosis (RE), a Ca(2+)-dependent and clathrin- and K(+)-independent process in chromaffin cells. Microtubule-associated force-producing protein involved in producing microtubule bundles and able to bind and hydrolyze GTP. Through its interaction with DNAJC6, acts during the early steps of clathrin-coated vesicle (CCV) formation. This is Dynamin-1 (Dnm1) from Rattus norvegicus (Rat).